Consider the following 39-residue polypeptide: Photosystem II reaction center protein L (39 aa).

Residues 18 to 38 form a helical membrane-spanning segment; that stretch reads SLYLGLLLVFVTAVLFTSYFF.

It belongs to the PsbL family. As to quaternary structure, PSII is composed of 1 copy each of membrane proteins PsbA, PsbB, PsbC, PsbD, PsbE, PsbF, PsbH, PsbI, PsbJ, PsbK, PsbL, PsbM, PsbT, PsbX, PsbY, Psb30/Ycf12, peripheral proteins PsbO, CyanoQ (PsbQ), PsbU, PsbV and a large number of cofactors. It forms dimeric complexes.

It localises to the cellular thylakoid membrane. Its function is as follows. One of the components of the core complex of photosystem II (PSII). PSII is a light-driven water:plastoquinone oxidoreductase that uses light energy to abstract electrons from H(2)O, generating O(2) and a proton gradient subsequently used for ATP formation. It consists of a core antenna complex that captures photons, and an electron transfer chain that converts photonic excitation into a charge separation. This subunit is found at the monomer-monomer interface and is required for correct PSII assembly and/or dimerization. The sequence is that of Photosystem II reaction center protein L from Prochlorococcus marinus (strain MIT 9313).